Here is a 349-residue protein sequence, read N- to C-terminus: Isopentenyl-diphosphate delta-isomerase (349 aa).

A substrate-binding site is contributed by 12–13 (RK). FMN is bound by residues 69–71 (GMT), S99, and N128. Q158 provides a ligand contact to substrate. E159 contributes to the Mg(2+) binding site. Residues K189, S214, T219, 265–267 (GIR), and 286–287 (SG) contribute to the FMN site.

It belongs to the IPP isomerase type 2 family. Homooctamer. Dimer of tetramers. The cofactor is FMN. NADPH serves as cofactor. It depends on Mg(2+) as a cofactor.

The protein localises to the cytoplasm. The enzyme catalyses isopentenyl diphosphate = dimethylallyl diphosphate. Its function is as follows. Involved in the biosynthesis of isoprenoids. Catalyzes the 1,3-allylic rearrangement of the homoallylic substrate isopentenyl (IPP) to its allylic isomer, dimethylallyl diphosphate (DMAPP). The chain is Isopentenyl-diphosphate delta-isomerase from Latilactobacillus sakei subsp. sakei (strain 23K) (Lactobacillus sakei subsp. sakei).